The sequence spans 116 residues: NADH-quinone oxidoreductase subunit A (116 aa).

3 helical membrane passes run 3–23 (FTLLVVVILTAIALVAVALGI), 61–81 (FAILFLMFDVETVFLFPWAVV), and 85–105 (LGVYGLFSILFFLVILVLGLA).

It belongs to the complex I subunit 3 family. NDH-1 is composed of 14 different subunits. Subunits NuoA, H, J, K, L, M, N constitute the membrane sector of the complex.

The protein localises to the cell inner membrane. It carries out the reaction a quinone + NADH + 5 H(+)(in) = a quinol + NAD(+) + 4 H(+)(out). Its function is as follows. NDH-1 shuttles electrons from NADH, via FMN and iron-sulfur (Fe-S) centers, to quinones in the respiratory chain. The immediate electron acceptor for the enzyme in this species is believed to be a menaquinone. Couples the redox reaction to proton translocation (for every two electrons transferred, four hydrogen ions are translocated across the cytoplasmic membrane), and thus conserves the redox energy in a proton gradient. This chain is NADH-quinone oxidoreductase subunit A, found in Phocaeicola vulgatus (strain ATCC 8482 / DSM 1447 / JCM 5826 / CCUG 4940 / NBRC 14291 / NCTC 11154) (Bacteroides vulgatus).